We begin with the raw amino-acid sequence, 273 residues long: Sulfur carrier protein FdhD (273 aa).

Cys124 serves as the catalytic Cysteine persulfide intermediate. 263–268 (FCRQSR) lines the Mo-bis(molybdopterin guanine dinucleotide) pocket.

This sequence belongs to the FdhD family.

The protein resides in the cytoplasm. Functionally, required for formate dehydrogenase (FDH) activity. Acts as a sulfur carrier protein that transfers sulfur from IscS to the molybdenum cofactor prior to its insertion into FDH. The chain is Sulfur carrier protein FdhD from Acinetobacter baylyi (strain ATCC 33305 / BD413 / ADP1).